The sequence spans 329 residues: Probable endo-beta-1,4-glucanase B (329 aa).

An N-terminal signal peptide occupies residues 1 to 18 (MKFGSIVLIAAAAGSAVA). Asn33 and Asn96 each carry an N-linked (GlcNAc...) asparagine glycan. Glu156 functions as the Proton donor in the catalytic mechanism. Residue Glu263 is the Nucleophile of the active site.

This sequence belongs to the glycosyl hydrolase 5 (cellulase A) family.

It localises to the secreted. The enzyme catalyses Endohydrolysis of (1-&gt;4)-beta-D-glucosidic linkages in cellulose, lichenin and cereal beta-D-glucans.. Its function is as follows. Has endoglucanase activity on substrates containing beta-1,4 glycosidic bonds, like in carboxymethylcellulose (CMC), hydroxyethylcellulose (HEC) and beta-glucan. Involved in the degradation of complex natural cellulosic substrates. The sequence is that of Probable endo-beta-1,4-glucanase B (eglB) from Neosartorya fischeri (strain ATCC 1020 / DSM 3700 / CBS 544.65 / FGSC A1164 / JCM 1740 / NRRL 181 / WB 181) (Aspergillus fischerianus).